The primary structure comprises 686 residues: U-box domain-containing protein 19 (686 aa).

The U-box domain occupies 277-351 (LNVDDLRCPI…QSYSKQNGVV (75 aa)). ARM repeat units lie at residues 406-445 (TFYRSCLVEAGVVESLMKILRSDDPRIQENAMAGIMNLSK), 448-489 (AGKT…YLSS), 491-533 (GDYS…SLLM), 536-577 (PDNH…KMAE), and 579-620 (PDGM…NLCH).

It catalyses the reaction S-ubiquitinyl-[E2 ubiquitin-conjugating enzyme]-L-cysteine + [acceptor protein]-L-lysine = [E2 ubiquitin-conjugating enzyme]-L-cysteine + N(6)-ubiquitinyl-[acceptor protein]-L-lysine.. The protein operates within protein modification; protein ubiquitination. In terms of biological role, functions as an E3 ubiquitin ligase. This chain is U-box domain-containing protein 19 (PUB19), found in Arabidopsis thaliana (Mouse-ear cress).